The sequence spans 186 residues: Iodotyrosine deiodinase (186 aa).

Residues 11–15 (RKTVR), 38–39 (PS), and serine 39 contribute to the FMN site. Positions 41, 68, 72, and 92 each coordinate 3-iodo-L-tyrosine. The L-tyrosine site is built by methionine 41, glutamate 68, tyrosine 72, and lysine 92. An FMN-binding site is contributed by arginine 176.

The protein belongs to the nitroreductase family. In terms of assembly, homodimer. It depends on FMN as a cofactor.

It carries out the reaction 2 iodide + L-tyrosine + 2 NADP(+) = 3,5-diiodo-L-tyrosine + 2 NADPH + H(+). The catalysed reaction is iodide + L-tyrosine + NADP(+) = 3-iodo-L-tyrosine + NADPH. The enzyme catalyses 3-iodo-L-tyrosine + iodide + NADP(+) = 3,5-diiodo-L-tyrosine + NADPH + H(+). It catalyses the reaction L-tyrosine + chloride + NADP(+) = 3-chloro-L-tyrosine + NADPH. It carries out the reaction bromide + L-tyrosine + NADP(+) = 3-bromo-L-tyrosine + NADPH. In terms of biological role, catalyzes the dehalogenation of halotyrosines such as 3-bromo-L-tyrosine, 3-chloro-L-tyrosine, 3-iodo-L-tyrosine and 3,5-diiodo-L-tyrosine. Activity towards 2-iodophenol is weak. This chain is Iodotyrosine deiodinase, found in Thermotoga neapolitana (strain ATCC 49049 / DSM 4359 / NBRC 107923 / NS-E).